The following is a 67-amino-acid chain: Large ribosomal subunit protein uL30 (67 aa).

It belongs to the universal ribosomal protein uL30 family. Part of the 50S ribosomal subunit.

This Thermotoga neapolitana (strain ATCC 49049 / DSM 4359 / NBRC 107923 / NS-E) protein is Large ribosomal subunit protein uL30.